The following is a 205-amino-acid chain: RPW8-like protein 2 (205 aa).

The region spanning 1 to 153 (MPLTEIIAGA…IMGQPIDCII (153 aa)) is the RPW8 domain. A helical membrane pass occupies residues 7–23 (IAGAALGLALQILHEAI). 2 coiled-coil regions span residues 70 to 92 (EDLKHLLEKAVVLVEAYAELKRR) and 125 to 147 (ADIKDLMAKMSEMNTKLEKIMGQ).

The protein belongs to the plant RPW8 protein family.

It is found in the membrane. In terms of biological role, probable disease resistance (R) protein. In Arabidopsis thaliana (Mouse-ear cress), this protein is RPW8-like protein 2.